A 787-amino-acid chain; its full sequence is Protocadherin beta-15 (787 aa).

A signal peptide spans Met1–Ala26. Topologically, residues Gly27–Leu690 are extracellular. 5 Cadherin domains span residues Val35 to Phe133, Met138 to Phe242, Tyr247 to Leu347, Leu352 to Phe451, and Tyr456 to Val561. N-linked (GlcNAc...) asparagine glycosylation occurs at Asn418. An N-linked (GlcNAc...) asparagine glycan is attached at Asn567. The region spanning Gly568–Leu671 is the Cadherin 6 domain. The helical transmembrane segment at Val691–Val711 threads the bilayer. The Cytoplasmic segment spans residues Arg712–Glu787.

Its subcellular location is the cell membrane. Its function is as follows. Potential calcium-dependent cell-adhesion protein. May be involved in the establishment and maintenance of specific neuronal connections in the brain. This chain is Protocadherin beta-15 (PCDHB15), found in Homo sapiens (Human).